Reading from the N-terminus, the 682-residue chain is uncharacterized protein (682 aa).

The MCM domain occupies 284 to 487 (VVNILADRLI…KDKDIAEYIV (204 aa)). 329–336 (TDPGIGKT) contacts ATP.

Belongs to the MCM family.

This is an uncharacterized protein from Methanocaldococcus jannaschii (strain ATCC 43067 / DSM 2661 / JAL-1 / JCM 10045 / NBRC 100440) (Methanococcus jannaschii).